Reading from the N-terminus, the 843-residue chain is MDNSAITSQSNPTPLVCSVTPIIVGSPPSPANVIELSSPSTPPTPLTLLASFSKTPSRKTTSPDSNGENTICHGVRQVRRVPRNNPGREKKSITGPSKEHKQRTRSPKTTTRREIKIVEGDRLIVGHDKREKKGATTKRMKKRDGVADKKLYARVSKVKSSENLDLDAKIPSSKVCNNTLPLVGDDMDNESSELQLEQAIKRRHDWTPAREVTTPVVDVAELHSSPCGKAVTRMHGVGTLLSDYGFSGVVETSLGTKSESFRNAPTTKRPMELQKFSTVPAIPTPTESSTTEDIQGSSSKQQRVKAKKPQKGKLTTITSHATAKYCVADQTVDLDYIQNVAPKSPGRKNISNRPSGMKHSNSGRGKSSTLKNDNGPPVFRVVPPLEAFKSFEGQELLFGTSSQLERGHPEYRCDETQDIQNSPSNSAAVSELAVPYRISSEGKNLGSSLFRLSGSKNLWSASARDLTGAVFEVDEIDFQEPSMGLSVLATKSRCHPGNRGPPRRNLVDVDNVPDKKLDIDTTEGENGNHSSVADNIVDRENLNPKISANTSETNLECAPRNKPAFSRFTTSELAKKVAAYGFKPIKSRDNMISLLERCWETQSKTFMPESKPNQGTDDARKNGFRKENHSDVRVRPDSATLANRRSPKKRQAKALSKFQEPNNFLPIENSTTTASMLPIEHVISSHTILINDDQLSDSVGETVSFLPTLDHNGNGTTLQENMLEIKSPATPNARHSRQRSSSTSFSIEPPSLASQITKAIKSQPRIRAFNGLKQPTWYEKILMYDPIQLEDLAAWLNTDGFGRIGEDREVGPGVVREWCESKGVCCVWKKQVSGRSHCLPMVS.

Disordered regions lie at residues 26-111, 281-313, 339-377, 603-655, and 729-748; these read SPPS…KTTT, AIPTPTESSTTEDIQGSSSKQQRVKAKKPQKGK, NVAPKSPGRKNISNRPSGMKHSNSGRGKSSTLKNDNGPP, SKTF…AKAL, and ATPNARHSRQRSSSTSFSIE. Composition is skewed to polar residues over residues 50 to 69 and 285 to 301; these read ASFSKTPSRKTTSPDSNGEN and PTESSTTEDIQGSSSKQ. A compositionally biased stretch (basic residues) spans 302–311; the sequence is QRVKAKKPQK. Polar residues-rich tracts occupy residues 349–372 and 603–616; these read NISNRPSGMKHSNSGRGKSSTLKN and SKTFMPESKPNQGT. A compositionally biased stretch (basic and acidic residues) spans 617 to 636; it reads DDARKNGFRKENHSDVRVRP. Over residues 739 to 748 the composition is skewed to low complexity; sequence RSSSTSFSIE.

It belongs to the SLX4 family. Forms a heterodimer with SLX1. In terms of processing, phosphorylated in response to DNA damage.

The protein resides in the nucleus. In terms of biological role, regulatory subunit of the SLX1-SLX4 structure-specific endonuclease that resolves DNA secondary structures generated during DNA repair and recombination. Has endonuclease activity towards branched DNA substrates, introducing single-strand cuts in duplex DNA close to junctions with ss-DNA. This is Structure-specific endonuclease subunit SLX4 from Ajellomyces capsulatus (strain G186AR / H82 / ATCC MYA-2454 / RMSCC 2432) (Darling's disease fungus).